Here is a 481-residue protein sequence, read N- to C-terminus: Autolysin (481 aa).

The 136-residue stretch at 7 to 142 (KNEFIERLKT…LQDDNMLMIS (136 aa)) folds into the Peptidase C51 domain. Residues 198–323 (SNPKGIVIHN…NEFTSTSCPH (126 aa)) form the N-acetylmuramoyl-L-alanine amidase domain. The SH3b domain occupies 398–466 (EESARFTNGN…YLPIRTWNGS (69 aa)).

This sequence belongs to the N-acetylmuramoyl-L-alanine amidase 2 family.

The protein localises to the secreted. It carries out the reaction Hydrolyzes the link between N-acetylmuramoyl residues and L-amino acid residues in certain cell-wall glycopeptides.. Its function is as follows. Autolysins are involved in some important biological processes such as cell separation, cell-wall turnover, competence for genetic transformation, formation of the flagella and sporulation. Autolysin strictly depends on the presence of choline-containing cell walls for activity. This Staphylococcus aureus protein is Autolysin (lytA).